A 190-amino-acid chain; its full sequence is Jupiter microtubule associated homolog 2 (190 aa).

Methionine 1 is subject to N-acetylmethionine. A compositionally biased stretch (polar residues) spans methionine 1–arginine 15. Positions methionine 1–tyrosine 190 are disordered. An N6-acetyllysine modification is found at lysine 11. Serine 30 bears the Phosphoserine mark. The span at isoleucine 35–alanine 44 shows a compositional bias: polar residues. A phosphoserine mark is found at serine 45, serine 69, and serine 97. Composition is skewed to basic and acidic residues over residues lysine 110–alanine 129 and glutamate 138–isoleucine 153. A Phosphoserine modification is found at serine 144.

This sequence belongs to the JUPITER family. In terms of assembly, monomer. Dimer. Interacts with TPCN1.

It localises to the cytoplasm. The protein localises to the nucleus. Nicotinic acid adenine dinucleotide phosphate (NAADP) binding protein required for NAADP-evoked intracellular calcium release. Confers NAADP-sensitivity to the two pore channels (TPCs) complex. Enables NAADP to activate Ca(2+) release from the endoplasmic reticulum through ryanodine receptors. This Mus musculus (Mouse) protein is Jupiter microtubule associated homolog 2.